Here is a 47-residue protein sequence, read N- to C-terminus: Photosystem II reaction center protein K (47 aa).

The propeptide occupies 1 to 10 (MAAFTLDLMA). A helical membrane pass occupies residues 20–40 (APAVDVLPLIPIFFFLLVFVW).

The protein belongs to the PsbK family. PSII is composed of 1 copy each of membrane proteins PsbA, PsbB, PsbC, PsbD, PsbE, PsbF, PsbH, PsbI, PsbJ, PsbK, PsbL, PsbM, PsbT, PsbX, PsbY, Psb30/Ycf12, peripheral proteins PsbO, CyanoQ (PsbQ), PsbU, PsbV and a large number of cofactors. It forms dimeric complexes.

The protein resides in the cellular thylakoid membrane. Functionally, one of the components of the core complex of photosystem II (PSII). PSII is a light-driven water:plastoquinone oxidoreductase that uses light energy to abstract electrons from H(2)O, generating O(2) and a proton gradient subsequently used for ATP formation. It consists of a core antenna complex that captures photons, and an electron transfer chain that converts photonic excitation into a charge separation. This is Photosystem II reaction center protein K from Prochlorococcus marinus (strain MIT 9303).